The primary structure comprises 314 residues: Probable cell division protein WhiA (314 aa).

Residues 282–314 (SLKELGELCRPPVSKSGAAHRMRQLMALAESLE) constitute a DNA-binding region (H-T-H motif).

Belongs to the WhiA family.

Its function is as follows. Involved in cell division and chromosome segregation. This Symbiobacterium thermophilum (strain DSM 24528 / JCM 14929 / IAM 14863 / T) protein is Probable cell division protein WhiA.